We begin with the raw amino-acid sequence, 468 residues long: Pentatricopeptide repeat-containing protein At5g46680 (468 aa).

12 PPR repeats span residues 12 to 46, 47 to 81, 82 to 116, 117 to 152, 153 to 183, 187 to 221, 222 to 256, 257 to 291, 293 to 327, 328 to 362, 363 to 393, and 394 to 428; these read STKLLNISVNSLCKFRNLERAETLLIDGIRLGVLP, DVITYNTLIKGYTRFIGIDEAYAVTRRMREAGIEP, DVTTYNSLISGAAKNLMLNRVLQLFDEMLHSGLSP, DMWSYNTLMSCYFKLGRHGEAFKILHEDIHLAGLVP, GIDTYNILLDALCKSGHTDNAIELFKHLKSR, ELMTYNILINGLCKSRRVGSVDWMMRELKKSGYTP, NAVTYTTMLKMYFKTKRIEKGLQLFLKMKKEGYTF, DGFANCAVVSALIKTGRAEEAYECMHELVRSGTRS, DIVSYNTLLNLYFKDGNLDAVDDLLEEIEMKGLKP, DDYTHTIIVNGLLNIGNTGGAEKHLACIGEMGMQP, SVVTCNCLIDGLCKAGHVDRAMRLFASMEVR, and DEFTYTSVVHNLCKDGRLVCASKLLLSCYNKGMKI.

Belongs to the PPR family. P subfamily.

In Arabidopsis thaliana (Mouse-ear cress), this protein is Pentatricopeptide repeat-containing protein At5g46680.